The following is a 166-amino-acid chain: NADH-quinone oxidoreductase subunit A (166 aa).

A run of 3 helical transmembrane segments spans residues 16 to 36 (FAVF…GAYF), 68 to 88 (FYLV…LYAW), and 98 to 118 (IGFI…FYLV). Residues 141 to 166 (RYASSHPQDISQELSVAGSQQANESR) are disordered.

Belongs to the complex I subunit 3 family. In terms of assembly, NDH-1 is composed of 13 different subunits. Subunits NuoA, H, J, K, L, M, N constitute the membrane sector of the complex.

It localises to the cell inner membrane. The catalysed reaction is a quinone + NADH + 5 H(+)(in) = a quinol + NAD(+) + 4 H(+)(out). Functionally, NDH-1 shuttles electrons from NADH, via FMN and iron-sulfur (Fe-S) centers, to quinones in the respiratory chain. The immediate electron acceptor for the enzyme in this species is believed to be ubiquinone. Couples the redox reaction to proton translocation (for every two electrons transferred, four hydrogen ions are translocated across the cytoplasmic membrane), and thus conserves the redox energy in a proton gradient. The sequence is that of NADH-quinone oxidoreductase subunit A from Yersinia pseudotuberculosis serotype O:1b (strain IP 31758).